A 131-amino-acid polypeptide reads, in one-letter code: Small ribosomal subunit protein bS6 (131 aa).

Residues 96–131 (VTEASPMAKAKDERDSRRGPAGDRSYDEANAEEIAE) form a disordered region. A compositionally biased stretch (basic and acidic residues) spans 104–122 (KAKDERDSRRGPAGDRSYD).

Belongs to the bacterial ribosomal protein bS6 family.

Binds together with bS18 to 16S ribosomal RNA. The polypeptide is Small ribosomal subunit protein bS6 (Shewanella sp. (strain ANA-3)).